A 252-amino-acid chain; its full sequence is Chitooligosaccharide deacetylase (252 aa).

Positions 61 and 125 each coordinate Mg(2+).

Belongs to the YdjC deacetylase family. ChbG subfamily. As to quaternary structure, homodimer. The cofactor is Mg(2+).

It is found in the cytoplasm. It catalyses the reaction N,N'-diacetylchitobiose + H2O = N-acetyl-beta-D-glucosaminyl-(1-&gt;4)-D-glucosamine + acetate. The catalysed reaction is diacetylchitobiose-6'-phosphate + H2O = N'-monoacetylchitobiose-6'-phosphate + acetate. It functions in the pathway glycan degradation; chitin degradation. Its function is as follows. Involved in the degradation of chitin. ChbG is essential for growth on the acetylated chitooligosaccharides chitobiose and chitotriose but is dispensable for growth on cellobiose and chitosan dimer, the deacetylated form of chitobiose. Deacetylation of chitobiose-6-P and chitotriose-6-P is necessary for both the activation of the chb promoter by the regulatory protein ChbR and the hydrolysis of phosphorylated beta-glucosides by the phospho-beta-glucosidase ChbF. Catalyzes the removal of only one acetyl group from chitobiose-6-P to yield monoacetylchitobiose-6-P, the inducer of ChbR and the substrate of ChbF. This is Chitooligosaccharide deacetylase from Escherichia coli O8 (strain IAI1).